The primary structure comprises 135 residues: Alpha-ketoglutarate dehydrogenase subunit 4, mitochondrial (135 aa).

This sequence belongs to the alpha-ketoglutarate dehydrogenase component 4 family. Component of the 2-oxoglutarate dehydrogenase complex (OGDC), also called alpha-ketoglutarate dehydrogenase (KGDH) complex. The copmplex is composed of the catalytic subunits OGDH (2-oxoglutarate dehydrogenase; also called E1 subunit), DLST (dihydrolipoamide succinyltransferase; also called E2 subunit) and DLD (dihydrolipoamide dehydrogenase; also called E3 subunit), and the assembly factor KGD4. Within OGDC, interacts (via N-terminus) with E3 subunit and (via C-terminus) with the complex core formed by E1 and E2 subunits.

The protein localises to the mitochondrion. Functionally, molecular adapter that is necessary to a form a stable 2-oxoglutarate dehydrogenase enzyme complex (OGDC). Required for incorporation of the E3 subunit into the E1-E2 core of mitochondrial OGDC, and acting as a stability factor for the fully assembled complex. The protein is Alpha-ketoglutarate dehydrogenase subunit 4, mitochondrial (KGD4) of Chaetomium thermophilum (strain DSM 1495 / CBS 144.50 / IMI 039719) (Thermochaetoides thermophila).